The primary structure comprises 1108 residues: AP-3 complex subunit beta (1108 aa).

HEAT repeat units lie at residues 90–127, 327–363, 397–433, and 434–471; these read DSALLSINTIQKSLNDQSQVIRASALRVMSSIRVIDII, IEAQKVGKSLVRILRSGPEVQYITLTNISTMVTLRPS, ENIGKILKEFKEYVKNEDKKFVAATIQAIGSCASTVP, and DVTESCIYGLMSLLSNQSTVVVAESVIVLKRLLQLNAT. The segment covering 480 to 490 has biased composition (basic and acidic residues); sequence KEKEKEKDVKE. Disordered stretches follow at residues 480–501, 736–797, and 811–835; these read KEKEKEKDVKENQSTISKHSSS, DEEE…YDGE, and LFGITNDDNNQTANGIGGGGSGEEE. Acidic residues-rich tracts occupy residues 736–764 and 780–797; these read DEEEEDEEEYDEEEEEEEYEEQNEYEDFF and YDEDEYNQDIDDGEYDGE.

The protein belongs to the adaptor complexes large subunit family. In terms of assembly, adaptor protein complex 3 (AP-3) is a heterotetramer composed of two large adaptins (delta-type subunit and beta-type subunit), a medium adaptin (mu-type subunit) and a small adaptin (sigma-type subunit).

Its subcellular location is the endosome membrane. Its function is as follows. Part of the AP-3 complex, an adaptor-related complex which is essential for the compartmentalization of the endocytic pathway. This is AP-3 complex subunit beta (ap3b-1) from Dictyostelium discoideum (Social amoeba).